The primary structure comprises 431 residues: Fumarylacetoacetase (431 aa).

Asp133 contributes to the Ca(2+) binding site. Residue Tyr135 coordinates substrate. Residue His140 is the Proton acceptor of the active site. Arg149 contributes to the substrate binding site. Glu209, Glu211, and Asp243 together coordinate Ca(2+). Residue Asp243 participates in Mg(2+) binding. Substrate is bound by residues Gln250 and Tyr254. Mg(2+) contacts are provided by Lys263 and Thr267. Thr362 serves as a coordination point for substrate.

The protein belongs to the FAH family. It depends on Ca(2+) as a cofactor. Requires Mg(2+) as cofactor.

The catalysed reaction is 4-fumarylacetoacetate + H2O = acetoacetate + fumarate + H(+). The protein operates within amino-acid degradation; L-phenylalanine degradation; acetoacetate and fumarate from L-phenylalanine: step 6/6. In terms of biological role, use of phenylalanine and phenylacetate as a carbon source. The protein is Fumarylacetoacetase (fahA) of Emericella nidulans (strain FGSC A4 / ATCC 38163 / CBS 112.46 / NRRL 194 / M139) (Aspergillus nidulans).